A 150-amino-acid polypeptide reads, in one-letter code: Large ribosomal subunit protein bL9 (150 aa).

The protein belongs to the bacterial ribosomal protein bL9 family.

In terms of biological role, binds to the 23S rRNA. In Polaromonas sp. (strain JS666 / ATCC BAA-500), this protein is Large ribosomal subunit protein bL9.